The following is a 218-amino-acid chain: Histone chaperone ASF1B (218 aa).

This sequence belongs to the ASF1 family. In terms of assembly, interacts with histone H3 and histone H4. Interacts strongly with the N-terminus of TOUSLED. Post-translationally, phosphorylated in vitro by TOUSLED.

The protein resides in the nucleus. Its function is as follows. Histone chaperone that facilitates histone deposition and histone exchange and removal during nucleosome assembly and disassembly. This Arabidopsis thaliana (Mouse-ear cress) protein is Histone chaperone ASF1B (ASF1B).